The following is a 189-amino-acid chain: Dual specificity phosphatase 29 (189 aa).

Residues 33 to 182 (HVNEVWPGVY…LRELDTHLQE (150 aa)) form the Tyrosine-protein phosphatase domain. 126-133 (HCVMGRSR) is a binding site for substrate. Cys-127 acts as the Phosphocysteine intermediate in catalysis.

The protein belongs to the protein-tyrosine phosphatase family. Non-receptor class dual specificity subfamily.

The protein localises to the cytoplasm. Its subcellular location is the nucleus. The catalysed reaction is O-phospho-L-tyrosyl-[protein] + H2O = L-tyrosyl-[protein] + phosphate. The enzyme catalyses O-phospho-L-seryl-[protein] + H2O = L-seryl-[protein] + phosphate. It carries out the reaction O-phospho-L-threonyl-[protein] + H2O = L-threonyl-[protein] + phosphate. In terms of biological role, dual specificity phosphatase able to dephosphorylate phosphotyrosine, phosphoserine and phosphothreonine residues within the same substrate, with a preference for phosphotyrosine as a substrate. Involved in the modulation of AMPK and MAPK1/2 signaling pathways. This Danio rerio (Zebrafish) protein is Dual specificity phosphatase 29 (dusp29).